The chain runs to 229 residues: tRNA pseudouridine synthase B (229 aa).

Asp-52 functions as the Nucleophile in the catalytic mechanism.

It belongs to the pseudouridine synthase TruB family. Type 1 subfamily.

The catalysed reaction is uridine(55) in tRNA = pseudouridine(55) in tRNA. Responsible for synthesis of pseudouridine from uracil-55 in the psi GC loop of transfer RNAs. The sequence is that of tRNA pseudouridine synthase B from Flavobacterium johnsoniae (strain ATCC 17061 / DSM 2064 / JCM 8514 / BCRC 14874 / CCUG 350202 / NBRC 14942 / NCIMB 11054 / UW101) (Cytophaga johnsonae).